Consider the following 495-residue polypeptide: Lysine--tRNA ligase (495 aa).

Mg(2+) contacts are provided by Glu-406 and Glu-413.

This sequence belongs to the class-II aminoacyl-tRNA synthetase family. In terms of assembly, homodimer. Mg(2+) serves as cofactor.

It localises to the cytoplasm. The enzyme catalyses tRNA(Lys) + L-lysine + ATP = L-lysyl-tRNA(Lys) + AMP + diphosphate. This chain is Lysine--tRNA ligase, found in Staphylococcus aureus (strain MRSA252).